Consider the following 548-residue polypeptide: Probable 2,3-bisphosphoglycerate-independent phosphoglycerate mutase (548 aa).

Positions 20 and 73 each coordinate Mn(2+). The active-site Phosphoserine intermediate is Ser-73. Residues His-134, 164-165 (RD), Arg-200, Arg-207, 279-282 (RGDR), and Lys-354 each bind substrate. Residues Asp-422, His-426, Asp-463, His-464, and His-493 each coordinate Mn(2+).

Belongs to the BPG-independent phosphoglycerate mutase family. Monomer. Mn(2+) serves as cofactor.

The enzyme catalyses (2R)-2-phosphoglycerate = (2R)-3-phosphoglycerate. The protein operates within carbohydrate degradation; glycolysis; pyruvate from D-glyceraldehyde 3-phosphate: step 3/5. Catalyzes the interconversion of 2-phosphoglycerate and 3-phosphoglycerate. The chain is Probable 2,3-bisphosphoglycerate-independent phosphoglycerate mutase (gpmI) from Leptospira interrogans serogroup Icterohaemorrhagiae serovar Lai (strain 56601).